The chain runs to 155 residues: Large ribosomal subunit protein uL30 (155 aa).

Belongs to the universal ribosomal protein uL30 family. Part of the 50S ribosomal subunit.

The chain is Large ribosomal subunit protein uL30 from Pyrococcus furiosus (strain ATCC 43587 / DSM 3638 / JCM 8422 / Vc1).